The chain runs to 208 residues: Urease accessory protein UreG 1 (208 aa).

14-21 (GPVGSGKT) contributes to the GTP binding site.

It belongs to the SIMIBI class G3E GTPase family. UreG subfamily. In terms of assembly, homodimer. UreD, UreF and UreG form a complex that acts as a GTP-hydrolysis-dependent molecular chaperone, activating the urease apoprotein by helping to assemble the nickel containing metallocenter of UreC. The UreE protein probably delivers the nickel.

It localises to the cytoplasm. Facilitates the functional incorporation of the urease nickel metallocenter. This process requires GTP hydrolysis, probably effectuated by UreG. In terms of biological role, disruption of the ure1 gene cluster suggests that it protects brucellae during their passage through the stomach. The major route of infection in human brucellosis is oral. This is Urease accessory protein UreG 1 from Brucella abortus (strain 2308).